Consider the following 1811-residue polypeptide: MAVDSSMELLFLDTFKHPSAEQSSHIDVVRFPCVVYINEVRVIPPGVRAHSGLPDNRAYGETSPHTFQLDLFFNNVSKPSAPVFDRLGSLEYDENTSIIFRPNSKVNTDGLVLRGWYNCLTLAIYGSVDRVISHDRDSPPPPPPPPPPPQPQPTLKRNLKHADGEKEDQFNGSPPRPQPRGPRTPPGPPPPDDDEDDPMSLPVSGDKEEDVPHREDYFEPISPDRNSVPQEGQYSDEGEVEEEPQEEGEDDEDDVDVEEEEDEDEDDCHTVDSIPDDEEEDEEEEGEEDEEGEGDDGYEQISSDEDGIADLERETFKYPNFDVEYTPEDLASVPPMTYDPYDRELAPLLYFSCPYKTTFEIEISRMKDQGPDKENSGAVEASVKLTELLDLYQEDRGAKWVTALEEIPSLIIKGLSYLQLKNTEQDSLGQLVDWTMQALNLQVAFRQPIALNVRQLKAGTKLVTSLAECGAPGVTELLQAGVINVLFDLLFADHVSSSLKLNAFKALDSVISMTEGMEAFLRSTQNEKSGYQRLLELILLDQTVRVVTAGSAILQKCHFYEILSEIKRLGDHIAEKTSAVPNHSEPDQDTDAVLERANPDYENEVEASMDMDLLESSIISEGEIEKLTNLLEEVFHVMETAPHTMTQPPVKSFPTIARITGPPERDDPYPVLFRYLHSHHFLELVTLLLSIPITSAHQGVLQATKDVLKFLAQSQKGLLFFMSEYEATNLLIRALCHLYDQDEEEGLQSDGADDAFALWLQDSTQTLQCITELFSHFQRCTASEETDHSDLLGTLHNLYLITFNPVGRSAVGHVFSLDKNLQSLITLMEYYSKEALGDSKSKKSVAYNYACVLTLVVAQSSSGVQMLEQHAASLLKLCKADENNAKLQELGKWLEPLKNLRFEINCIPNLIEYVKQNIDNLMTAEGVGLTTALRVLCNVACPPPPVEGQQKDLKWNLAVIQLFSAEGMDTFIRVLQKLNSILTQPWRLHVNMGTTLHRVTTISMARCTLTLLKTMLTELLRGGSFEFKDMRVPSALVTLHMLLCSIPLSGRLDSDEQKIQNDIIDILLTFTQGVNEKLTISEETLANNTWSLMLKEVLSSILKVPEGFFSGLILLSELLPLPLPMQTTQVIEPHDISVALNTRKLWSMHLHVQAKLLQEIVRSFSGTTCQPIQHMLRRICVQLCDLASPTALLIMRTVLDLIVEDLQSTSEDKEKQYTSQTTRLLALLDALASHKACKLAILHLINGTIKGDERYAEIFQDLLALVRSPGDSVTRQQCVEYVTSILQSLCDQDIALILPSPSEGPASELEQLSNSLPSKELMTAICDCLLATLANSESSYNCLLTCVRTMMFLAEHDYGLFHLKSSLRKNSSALHSLLKRVVSTFSKDTGELASASLDFMRQILNADAMGCCGDDSGLMEVEGAHPPRTMSLNAAELKQLLQSKEESPESLFLELEKLVLEHSKDDDSLESLLDNVIGLKQMLESSGEPLPLSDQDVEPVLSAPESLQNLFNNRTAYVLADVMDDQLKSMWFTPFQAEEIDTDLDLVKVDLIELSEKCCSDFDLHSELERSFLSEPSSPGRSKTTKGFKLGKHKHETFITSSGKSEYIEPAKRAHVVPPPRGRGRGGFGQGIRPHDIFRQRKQNTSRPPSMHVDDFVAAESKEVVPQDGIPPPKRPLKVSQKISSRGGFSGNRGGRGAFHSQNRFFTPPASKGNYSRREGTRGSSWSAQNTPRGNYNESRGGQSNFNRGPLPPLRPLSSTGYRPSPRDRASRGRGGLGPSWASTNSGSGGSRGKFVSGGSGRGRHVRSFTR.

A2 bears the N-acetylalanine mark. Residues 132–302 (ISHDRDSPPP…EGDDGYEQIS (171 aa)) form a disordered region. A phosphoserine mark is found at S133 and S138. Pro residues predominate over residues 139–152 (PPPPPPPPPPPQPQ). Over residues 160–169 (KHADGEKEDQ) the composition is skewed to basic and acidic residues. At S173 the chain carries Phosphoserine. Positions 174–190 (PPRPQPRGPRTPPGPPP) are enriched in pro residues. T184 is subject to Phosphothreonine. S222 carries the post-translational modification Phosphoserine. Residues 224–233 (DRNSVPQEGQ) are compositionally biased toward polar residues. Acidic residues-rich tracts occupy residues 234–267 (YSDEGEVEEEPQEEGEDDEDDVDVEEEEDEDEDD) and 274–302 (IPDDEEEDEEEEGEEDEEGEGDDGYEQIS). Y913 is modified (phosphotyrosine). S1578 bears the Phosphoserine mark. Disordered regions lie at residues 1615 to 1634 (HVVPPPRGRGRGGFGQGIRP) and 1662 to 1811 (KEVV…SFTR). Residues 1688–1697 (GFSGNRGGRG) show a composition bias toward gly residues. T1707 is subject to Phosphothreonine. Omega-N-methylarginine is present on R1722. A compositionally biased stretch (polar residues) spans 1722-1747 (RGSSWSAQNTPRGNYNESRGGQSNFN). Residue R1740 is modified to Asymmetric dimethylarginine; alternate. The residue at position 1740 (R1740) is an Omega-N-methylarginine; alternate. 3 positions are modified to asymmetric dimethylarginine: R1772, R1774, and R1792. Positions 1787–1801 (GSGGSRGKFVSGGSG) are enriched in gly residues. A compositionally biased stretch (basic residues) spans 1802 to 1811 (RGRHVRSFTR).

The protein belongs to the vir family. Component of the WMM complex, a N6-methyltransferase complex composed of a catalytic subcomplex, named MAC, and of an associated subcomplex, named MACOM. The MAC subcomplex is composed of METTL3 and METTL14. The MACOM subcomplex is composed of WTAP, ZC3H13, CBLL1/HAKAI, VIRMA, and, in some cases of RBM15 (RBM15 or RBM15B). Interacts with WTAP. Also a component of a MACOM-like complex, named WTAP complex, composed of WTAP, ZC3H13, CBLL1, VIRMA, RBM15, BCLAF1 and THRAP3. Interacts with NUDT21 and CPSF6.

Its subcellular location is the nucleus speckle. The protein resides in the nucleus. It localises to the nucleoplasm. The protein localises to the cytoplasm. Its function is as follows. Associated component of the WMM complex, a complex that mediates N6-methyladenosine (m6A) methylation of RNAs, a modification that plays a role in the efficiency of mRNA splicing and RNA processing. Acts as a key regulator of m6A methylation by promoting m6A methylation of mRNAs in the 3'-UTR near the stop codon: recruits the catalytic core components METTL3 and METTL14, thereby guiding m6A methylation at specific sites. Required for mRNA polyadenylation via its role in selective m6A methylation: m6A methylation of mRNAs in the 3'-UTR near the stop codon correlating with alternative polyadenylation (APA). This is Protein virilizer homolog from Mus musculus (Mouse).